A 477-amino-acid chain; its full sequence is Chromosomal replication initiator protein DnaA (477 aa).

The interval 1 to 87 (MSDRSDPTHA…AGVSNFAIVV (87 aa)) is domain I, interacts with DnaA modulators. The interval 87–132 (VNPEIAQDAFAQHPEPAAEQPYIETPTITAPTDNPGLPASPSRGDS) is domain II. Residues 112–131 (PTITAPTDNPGLPASPSRGD) form a disordered region. Residues 133-349 (RLNPKYGFDT…GTLIRVTAFA (217 aa)) form a domain III, AAA+ region region. ATP is bound by residues Gly177, Gly179, Lys180, and Thr181. The tract at residues 350–477 (SLNKTPVDLA…IKQNHRYGKM (128 aa)) is domain IV, binds dsDNA.

Belongs to the DnaA family. As to quaternary structure, oligomerizes as a right-handed, spiral filament on DNA at oriC.

It localises to the cytoplasm. Plays an essential role in the initiation and regulation of chromosomal replication. ATP-DnaA binds to the origin of replication (oriC) to initiate formation of the DNA replication initiation complex once per cell cycle. Binds the DnaA box (a 9 base pair repeat at the origin) and separates the double-stranded (ds)DNA. Forms a right-handed helical filament on oriC DNA; dsDNA binds to the exterior of the filament while single-stranded (ss)DNA is stabiized in the filament's interior. The ATP-DnaA-oriC complex binds and stabilizes one strand of the AT-rich DNA unwinding element (DUE), permitting loading of DNA polymerase. After initiation quickly degrades to an ADP-DnaA complex that is not apt for DNA replication. Binds acidic phospholipids. The chain is Chromosomal replication initiator protein DnaA from Clavibacter michiganensis subsp. michiganensis (strain NCPPB 382).